We begin with the raw amino-acid sequence, 405 residues long: Dynactin subunit 2 (405 aa).

A disordered region spans residues 1-25 (MADPKYADLPGIARNEPDVYETSDL). The residue at position 2 (alanine 2) is an N-acetylalanine. Position 6 is a phosphotyrosine (tyrosine 6). At serine 85 the chain carries Phosphoserine. Tyrosine 88 is subject to Phosphotyrosine. Positions 105-132 (YQRLLHEVQELTTEVEKIKMTVKESATE) form a coiled coil. Threonine 136 bears the Phosphothreonine mark. Positions 187 to 207 (KNTKGAGSGGKTTSGSPPDSS) are disordered. Serine 324 is subject to Phosphoserine.

The protein belongs to the dynactin subunit 2 family. Subunit of dynactin, a multiprotein complex part of a tripartite complex with dynein and a adapter, such as BICDL1, BICD2 or HOOK3. The dynactin complex is built around ACTR1A/ACTB filament and consists of an actin-related filament composed of a shoulder domain, a pointed end and a barbed end. Its length is defined by its flexible shoulder domain. The soulder is composed of 2 DCTN1 subunits, 4 DCTN2 and 2 DCTN3. The 4 DCNT2 (via N-terminus) bind the ACTR1A filament and act as molecular rulers to determine the length. The pointed end is important for binding dynein-dynactin cargo adapters and consists of 4 subunits: ACTR10, DCNT4, DCTN5 and DCTN6. The barbed end is composed of a CAPZA1:CAPZB heterodimers, which binds ACTR1A/ACTB filament and dynactin and stabilizes dynactin. Interacts with BICD2 and CEP135. Interacts with DYNAP. Interacts with ECPAS. Interacts with MAPRE1.

Its subcellular location is the cytoplasm. It localises to the cytoskeleton. The protein resides in the microtubule organizing center. The protein localises to the centrosome. It is found in the membrane. In terms of biological role, part of the dynactin complex that activates the molecular motor dynein for ultra-processive transport along microtubules. In the dynactin soulder domain, binds the ACTR1A filament and acts as a molecular ruler to determine the length. Modulates cytoplasmic dynein binding to an organelle, and plays a role in prometaphase chromosome alignment and spindle organization during mitosis. Involved in anchoring microtubules to centrosomes. May play a role in synapse formation during brain development. The chain is Dynactin subunit 2 (DCTN2) from Sus scrofa (Pig).